Consider the following 248-residue polypeptide: NLP effector protein Pc121494 (248 aa).

The N-terminal stretch at 1–19 is a signal peptide; that stretch reads MKFIAVLIAAIASLSAVQA. The Hepta-peptide GHRHDWE motif signature appears at 124 to 130; the sequence is GHRNGWE. Asn143 carries N-linked (GlcNAc...) asparagine glycosylation.

It belongs to the Necrosis inducing protein (NPP1) family.

The protein localises to the secreted. Functionally, secreted effector that contributes strongly to virulence during infection by P.capsici. In Phytophthora capsici, this protein is NLP effector protein Pc121494.